The following is a 375-amino-acid chain: Anhydro-N-acetylmuramic acid kinase (375 aa).

18-25 (GTSMDGID) is a binding site for ATP.

It belongs to the anhydro-N-acetylmuramic acid kinase family.

It catalyses the reaction 1,6-anhydro-N-acetyl-beta-muramate + ATP + H2O = N-acetyl-D-muramate 6-phosphate + ADP + H(+). Its pathway is amino-sugar metabolism; 1,6-anhydro-N-acetylmuramate degradation. The protein operates within cell wall biogenesis; peptidoglycan recycling. Its function is as follows. Catalyzes the specific phosphorylation of 1,6-anhydro-N-acetylmuramic acid (anhMurNAc) with the simultaneous cleavage of the 1,6-anhydro ring, generating MurNAc-6-P. Is required for the utilization of anhMurNAc either imported from the medium or derived from its own cell wall murein, and thus plays a role in cell wall recycling. In Rhodospirillum rubrum (strain ATCC 11170 / ATH 1.1.1 / DSM 467 / LMG 4362 / NCIMB 8255 / S1), this protein is Anhydro-N-acetylmuramic acid kinase.